Consider the following 202-residue polypeptide: Dephospho-CoA kinase (202 aa).

In terms of domain architecture, DPCK spans 3–200; it reads TIGLTGGIGS…QRYLTLAANR (198 aa). 11 to 16 provides a ligand contact to ATP; sequence GSGKSA.

Belongs to the CoaE family.

The protein localises to the cytoplasm. It carries out the reaction 3'-dephospho-CoA + ATP = ADP + CoA + H(+). It participates in cofactor biosynthesis; coenzyme A biosynthesis; CoA from (R)-pantothenate: step 5/5. Its function is as follows. Catalyzes the phosphorylation of the 3'-hydroxyl group of dephosphocoenzyme A to form coenzyme A. The protein is Dephospho-CoA kinase of Thiobacillus denitrificans (strain ATCC 25259 / T1).